The following is a 721-amino-acid chain: Protein mu-NS (721 aa).

The tract at residues 1-13 (MASFKGFSANTVP) is interaction with sigma-NS. The RNA-binding stretch occupies residues 1–38 (MASFKGFSANTVPVSKAKRDISSLAATPGLRSQSFTPS). The interval 14-40 (VSKAKRDISSLAATPGLRSQSFTPSVD) is interaction with mu-2. Residues 471-721 (SNDVTDGIKL…IDFSVPTDEL (251 aa)) are involved in the formation of factory-like inclusions. 2 coiled-coil regions span residues 522 to 559 (PLLS…KSAQ) and 628 to 684 (LMNG…ALNQ).

Belongs to the orthoreovirus mu-NS protein family. Interacts with mu-2. Interacts with sigma-NS; in viral factories. Interacts with the inner capsid proteins lambda-1 and sigma-2, and outer capsid protein lambda-2; in viral factories. Post-translationally, the N-terminus is blocked.

The protein resides in the host cytoplasm. Its function is as follows. Non-structural protein implicated with protein sigma-NS in forming the matrix of viral factories, which are large inclusions in the host cytoplasm where replication intermediates are assembled and viral RNA replication takes place. Together with mu-2, recruits the other core proteins to these factories. Binds RNA and recruits viral mRNAs to sites of viral replication. The polypeptide is Protein mu-NS (M3) (Reovirus type 3 (strain Dearing) (T3D)).